Here is a 318-residue protein sequence, read N- to C-terminus: NADH-ubiquinone oxidoreductase chain 1 (318 aa).

The next 8 membrane-spanning stretches (helical) occupy residues 1 to 21 (MLPI…VAFL), 71 to 91 (LLIL…TPIP), 101 to 121 (LGLL…LWAG), 145 to 165 (VTLG…TMQL), 172 to 192 (HIWL…STLA), 224 to 244 (FFLA…IMFI), 253 to 273 (ELFL…FLWI), and 294 to 314 (LPLT…ISGI).

Belongs to the complex I subunit 1 family.

Its subcellular location is the mitochondrion inner membrane. The catalysed reaction is a ubiquinone + NADH + 5 H(+)(in) = a ubiquinol + NAD(+) + 4 H(+)(out). Its function is as follows. Core subunit of the mitochondrial membrane respiratory chain NADH dehydrogenase (Complex I) that is believed to belong to the minimal assembly required for catalysis. Complex I functions in the transfer of electrons from NADH to the respiratory chain. The immediate electron acceptor for the enzyme is believed to be ubiquinone. This chain is NADH-ubiquinone oxidoreductase chain 1 (MT-ND1), found in Varanus rudicollis (Rough-necked monitor lizard).